A 951-amino-acid chain; its full sequence is Multiple C2 and transmembrane domain-containing protein 1 (951 aa).

4 disordered regions span residues 29-79, 92-117, 129-198, and 210-231; these read LGVG…RWSG, SSSQ…AEQG, LPVA…QKSS, and LEPA…ALQK. Residues 31–43 are compositionally biased toward gly residues; the sequence is VGKGKGGGGGRAG. The span at 147–168 shows a compositional bias: low complexity; sequence PGGRSPDSAPSSSSASSSLSSS. Residues 174–184 are compositionally biased toward basic and acidic residues; sequence RGDRVRDESTR. The span at 219–228 shows a compositional bias: low complexity; the sequence is PARGPAEPQA. C2 domains lie at 240 to 358, 404 to 521, and 555 to 676; these read KIST…DVTL, QTQS…KLEL, and QKER…AYVL. Residues Asp-275, Asp-281, Asp-328, Asp-330, Asp-336, Asp-438, Asp-444, Asp-491, Asp-493, Asp-499, Asp-594, Asp-600, Asp-646, Asp-648, and Asp-654 each contribute to the Ca(2+) site. A run of 2 helical transmembrane segments spans residues 763–783 and 866–886; these read FVLF…LLLL and PFLS…LYFI.

This sequence belongs to the MCTP family. Ca(2+) is required as a cofactor.

It is found in the cytoplasmic vesicle. The protein resides in the secretory vesicle. Its subcellular location is the synaptic vesicle membrane. The protein localises to the recycling endosome. It localises to the endoplasmic reticulum membrane. In terms of biological role, calcium sensor which is essential for the stabilization of normal baseline neurotransmitter release and for the induction and long-term maintenance of presynaptic homeostatic plasticity. The protein is Multiple C2 and transmembrane domain-containing protein 1 of Mus musculus (Mouse).